The sequence spans 558 residues: Mitochondrial nucleoid-associated protein 1 (558 aa).

At 1–527 (MGAAEPRMEV…VQCNTTIKKS (527 aa)) the chain is on the extracellular side. Disordered regions lie at residues 29-88 (KMRG…SWTA), 130-205 (LQRV…KLGT), and 222-269 (LSDR…KTQK). Over residues 36-45 (SADQNVSQSK) the composition is skewed to polar residues. Residues 51 to 81 (QKEKSPTRDLTRAKEKELEVDRPKRAVKAET) show a composition bias toward basic and acidic residues. Polar residues-rich tracts occupy residues 131–144 (QRVT…SDAT) and 187–197 (SSTQPHANPAT). A helical transmembrane segment spans residues 528 to 548 (GVGGLTMLFAGYFILCCNWSF). Over 549-558 (KHLKLQHWRK) the chain is Cytoplasmic.

It localises to the mitochondrion inner membrane. Its subcellular location is the mitochondrion matrix. The protein resides in the mitochondrion nucleoid. Functionally, critical regulator of mitochondrial DNA (mtDNA) abundance. Binds dsDNA throughout the mitochondrial genome without sequence specificity and controls mtDNA copy number by promoting its replication. Also plays important roles in mitochondrial metabolism and cell proliferation. This is Mitochondrial nucleoid-associated protein 1 from Mus musculus (Mouse).